A 269-amino-acid chain; its full sequence is Hydroxyethylthiazole kinase (269 aa).

Met-46 is a binding site for substrate. 2 residues coordinate ATP: Arg-122 and Thr-168. Substrate is bound at residue Gly-195.

It belongs to the Thz kinase family. Requires Mg(2+) as cofactor.

The catalysed reaction is 5-(2-hydroxyethyl)-4-methylthiazole + ATP = 4-methyl-5-(2-phosphooxyethyl)-thiazole + ADP + H(+). Its pathway is cofactor biosynthesis; thiamine diphosphate biosynthesis; 4-methyl-5-(2-phosphoethyl)-thiazole from 5-(2-hydroxyethyl)-4-methylthiazole: step 1/1. Functionally, catalyzes the phosphorylation of the hydroxyl group of 4-methyl-5-beta-hydroxyethylthiazole (THZ). This chain is Hydroxyethylthiazole kinase, found in Geobacillus kaustophilus (strain HTA426).